Reading from the N-terminus, the 530-residue chain is Purine-cytosine permease FCY22 (530 aa).

At threonine 46 the chain carries Phosphothreonine. The next 12 helical transmembrane spans lie at 96 to 116 (MVIV…LNFG), 119 to 139 (VLVI…FSLF), 162 to 182 (FFSL…ISVS), 197 to 217 (CPIW…TFFG), 220 to 240 (VVHA…LVII), 263 to 283 (GVLS…TYAA), 298 to 318 (IFFS…ILGA), 345 to 365 (AILV…LLAL), 372 to 392 (VPGM…LAKI), 396 to 416 (VWTM…TYYF), 418 to 438 (GFME…IAIA), and 463 to 483 (LPIG…VALG).

This sequence belongs to the purine-cytosine permease (2.A.39) family.

It is found in the membrane. In terms of biological role, probable purine-cytosine permease. The polypeptide is Purine-cytosine permease FCY22 (FCY22) (Saccharomyces cerevisiae (strain ATCC 204508 / S288c) (Baker's yeast)).